A 165-amino-acid polypeptide reads, in one-letter code: MLKKLTKIKTEVYALGQHISMSAHKARRVVDQIRGRSYEETLMILELMPYRACYPILKLVYSAAANANYNMDSNESNLVISKAEVSEGTATKKLKPRARGRSFTIKRPTCHIAIVVKDISLDEYQYLGVDFIDSFRCSKKLQSKKKYTAMSYHDMYTNGGIWDKK.

The protein belongs to the universal ribosomal protein uL22 family. In terms of assembly, part of the 50S ribosomal subunit.

It is found in the plastid. The protein localises to the chloroplast. This protein binds specifically to 23S rRNA. In terms of biological role, the globular domain of the protein is located near the polypeptide exit tunnel on the outside of the subunit, while an extended beta-hairpin is found that lines the wall of the exit tunnel in the center of the 70S ribosome. The polypeptide is Large ribosomal subunit protein uL22c (rpl22) (Daucus carota (Wild carrot)).